Consider the following 448-residue polypeptide: Exodeoxyribonuclease 7 large subunit (448 aa).

Belongs to the XseA family. As to quaternary structure, heterooligomer composed of large and small subunits.

Its subcellular location is the cytoplasm. It carries out the reaction Exonucleolytic cleavage in either 5'- to 3'- or 3'- to 5'-direction to yield nucleoside 5'-phosphates.. Bidirectionally degrades single-stranded DNA into large acid-insoluble oligonucleotides, which are then degraded further into small acid-soluble oligonucleotides. This Bacillus pumilus (strain SAFR-032) protein is Exodeoxyribonuclease 7 large subunit.